Consider the following 461-residue polypeptide: Ribulose bisphosphate carboxylase (461 aa).

A substrate-binding site is contributed by Asn-112. Residue Lys-167 is the Proton acceptor of the active site. A substrate-binding site is contributed by Lys-169. Mg(2+) is bound by residues Lys-192, Asp-194, and Glu-195. Lys-192 is modified (N6-carboxylysine). The active-site Proton acceptor is the His-288. Residues Arg-289, His-322, and Ser-369 each contribute to the substrate site.

It belongs to the RuBisCO large chain family. Type II subfamily. In terms of assembly, homodimer. Mg(2+) serves as cofactor.

It carries out the reaction 2 (2R)-3-phosphoglycerate + 2 H(+) = D-ribulose 1,5-bisphosphate + CO2 + H2O. It catalyses the reaction D-ribulose 1,5-bisphosphate + O2 = 2-phosphoglycolate + (2R)-3-phosphoglycerate + 2 H(+). Functionally, ruBisCO catalyzes two reactions: the carboxylation of D-ribulose 1,5-bisphosphate, the primary event in carbon dioxide fixation, as well as the oxidative fragmentation of the pentose substrate. Both reactions occur simultaneously and in competition at the same active site. The protein is Ribulose bisphosphate carboxylase of Rhodopseudomonas palustris (strain ATCC BAA-98 / CGA009).